The sequence spans 370 residues: Pyruvate dehydrogenase E1 component subunit alpha (370 aa).

In terms of assembly, heterodimer of an alpha and a beta chain. It depends on thiamine diphosphate as a cofactor.

It carries out the reaction N(6)-[(R)-lipoyl]-L-lysyl-[protein] + pyruvate + H(+) = N(6)-[(R)-S(8)-acetyldihydrolipoyl]-L-lysyl-[protein] + CO2. Functionally, the pyruvate dehydrogenase complex catalyzes the overall conversion of pyruvate to acetyl-CoA and CO(2). It contains multiple copies of three enzymatic components: pyruvate dehydrogenase (E1), dihydrolipoamide acetyltransferase (E2) and lipoamide dehydrogenase (E3). This Staphylococcus aureus (strain MRSA252) protein is Pyruvate dehydrogenase E1 component subunit alpha (pdhA).